The chain runs to 89 residues: Small ribosomal subunit protein uS17 (89 aa).

This sequence belongs to the universal ribosomal protein uS17 family. As to quaternary structure, part of the 30S ribosomal subunit.

In terms of biological role, one of the primary rRNA binding proteins, it binds specifically to the 5'-end of 16S ribosomal RNA. This chain is Small ribosomal subunit protein uS17, found in Novosphingobium aromaticivorans (strain ATCC 700278 / DSM 12444 / CCUG 56034 / CIP 105152 / NBRC 16084 / F199).